A 625-amino-acid chain; its full sequence is DNA-directed RNA polymerase subunit gamma (625 aa).

Positions 71, 73, 86, and 89 each coordinate Zn(2+). Residues aspartate 467, aspartate 469, and aspartate 471 each contribute to the Mg(2+) site.

The protein belongs to the RNA polymerase beta' chain family. RpoC1 subfamily. In terms of assembly, in cyanobacteria the RNAP catalytic core is composed of 2 alpha, 1 beta, 1 beta', 1 gamma and 1 omega subunit. When a sigma factor is associated with the core the holoenzyme is formed, which can initiate transcription. It depends on Mg(2+) as a cofactor. The cofactor is Zn(2+).

The catalysed reaction is RNA(n) + a ribonucleoside 5'-triphosphate = RNA(n+1) + diphosphate. In terms of biological role, DNA-dependent RNA polymerase catalyzes the transcription of DNA into RNA using the four ribonucleoside triphosphates as substrates. This is DNA-directed RNA polymerase subunit gamma from Nostoc punctiforme (strain ATCC 29133 / PCC 73102).